A 652-amino-acid chain; its full sequence is Apicoplast pyruvate carrier 2 (652 aa).

The Cytoplasmic portion of the chain corresponds to 1–45 (MSAFPASPQPSAFPASPQPSAFPASPQPSASPVSPRHCVSPSSGT). A disordered region spans residues 1–53 (MSAFPASPQPSAFPASPQPSAFPASPQPSASPVSPRHCVSPSSGTLPSSSSPS). A run of 12 helical transmembrane segments spans residues 46–66 (LPSS…SSSS), 126–146 (NLLP…AVSY), 167–187 (GTTL…SAWM), 189–209 (LGLA…IAYG), 212–232 (TALG…KLSP), 278–298 (LPYL…SSLN), 345–365 (LVDP…AERQ), 385–405 (SCSA…ICSS), 417–437 (LSWQ…LYPE), 445–465 (AAPA…PRAL), 467–487 (SASR…SLTG), and 515–535 (LWGY…MNAL). Topologically, residues 536–652 (TAPCLFALST…LPYRFPTYSP (117 aa)) are cytoplasmic.

This sequence belongs to the major facilitator superfamily. In terms of assembly, interacts with apicoplast pyruvate carrier 1.

It localises to the plastid. Its subcellular location is the apicoplast. The protein localises to the membrane. Its function is as follows. Along with apicoplast pyruvate carrier 1, forms apicoplast pyruvate carrier (APC) complex, which transports pyruvate into the apicoplast and may also transport amino acids like methionine, serine, glycine and tryptophan with low efficiency. Required for maintaining pyruvate-dependent metabolic activities in the apicoplast, such as synthesis of fatty acids, isopentenyl pyrophosphate (IPP), dimethylallyl pyrophosphate (DMAPP) and methylerythritol 4-phosphate (MEP). Required for maintaining the integrity of the apicoplast. Required for normal parasite growth. This Toxoplasma gondii protein is Apicoplast pyruvate carrier 2.